We begin with the raw amino-acid sequence, 212 residues long: Probable U3 small nucleolar RNA-associated protein 11 (212 aa).

The protein belongs to the UTP11 family. As to quaternary structure, component of the ribosomal small subunit (SSU) processome.

It localises to the nucleus. The protein resides in the nucleolus. Its function is as follows. Involved in nucleolar processing of pre-18S ribosomal RNA. This chain is Probable U3 small nucleolar RNA-associated protein 11, found in Plasmodium falciparum (isolate 3D7).